The chain runs to 611 residues: MNPSQQHLPKLCPKRLFLFFTPFLLFSLYYILTTIKTITISSQDRHHPPQLHVPSISHYYSLPETSENRSSPPPLLLPPPPSSSSSLSSYFPLCPKNFTNYLPCHDPSTARQYSIERHYRRERHCPDIAQEKFRCLVPKPTGYKTPFPWPESRKYAWFRNVPFKRLAELKKTQNWVRLEGDRFVFPGGGTSFPGGVKDYVDVILSVLPLASGSIRTVLDIGCGVASFGAFLLNYKILTMSIAPRDIHEAQVQFALERGLPAMLGVLSTYKLPYPSRSFDMVHCSRCLVNWTSYDGLYLMEVDRVLRPEGYWVLSGPPVASRVKFKNQKRDSKELQNQMEKLNDVFRRLCWEKIAESYPVVIWRKPSNHLQCRKRLKALKFPGLCSSSDPDAAWYKEMEPCITPLPDVNDTNKTVLKNWPERLNHVPRMKTGSIQGTTIAGFKADTNLWQRRVLYYDTKFKFLSNGKYRNVIDMNAGLGGFAAALIKYPMWVMNVVPFDLKPNTLGVVYDRGLIGTYMNWCEALSTYPRTYDLIHANGVFSLYLDKCDIVDILLEMQRILRPEGAVIIRDRFDVLVKVKAITNQMRWNGTMYPEDNSVFDHGTILIVDNSIK.

The Cytoplasmic segment spans residues 1–15; that stretch reads MNPSQQHLPKLCPKR. Residues 16-36 form a helical; Signal-anchor for type II membrane protein membrane-spanning segment; the sequence is LFLFFTPFLLFSLYYILTTIK. The Lumenal segment spans residues 37–611; the sequence is TITISSQDRH…TILIVDNSIK (575 aa). N-linked (GlcNAc...) asparagine glycans are attached at residues asparagine 68, asparagine 97, asparagine 289, asparagine 408, asparagine 411, and asparagine 587.

This sequence belongs to the methyltransferase superfamily.

Its subcellular location is the endoplasmic reticulum membrane. The protein is Probable methyltransferase PMT19 of Arabidopsis thaliana (Mouse-ear cress).